Reading from the N-terminus, the 149-residue chain is Large ribosomal subunit protein bL9 (149 aa).

The protein belongs to the bacterial ribosomal protein bL9 family.

Its function is as follows. Binds to the 23S rRNA. The chain is Large ribosomal subunit protein bL9 from Proteus mirabilis (strain HI4320).